Reading from the N-terminus, the 2052-residue chain is Unconventional myosin-X (2052 aa).

Residue M1 is modified to N-acetylmethionine. The region spanning E63 to E739 is the Myosin motor domain. Residues N104, Y113, G160 to E165, and N215 each bind ATP. The interval L619–M641 is actin-binding. 3 consecutive IQ domains span residues V742 to K763, K764 to H787, and L788 to A817. The tract at residues E814–E884 is SAH. The segment at E819–R843 is disordered. Residues N885–A935 adopt a coiled-coil conformation. A phosphoserine mark is found at S963 and S966. A disordered region spans residues V964 to G1093. The segment covering P988–A1003 has biased composition (acidic residues). Residues V1040–S1049 show a composition bias toward polar residues. Over residues G1081–D1092 the composition is skewed to acidic residues. A Phosphothreonine modification is found at T1152. PH domains follow at residues E1206–A1304 and E1386–D1491. A MyTH4 domain is found at L1541–I1689. The FERM domain occupies M1694–R2038.

It belongs to the TRAFAC class myosin-kinesin ATPase superfamily. Myosin family. As to quaternary structure, monomer, when in an inactive conformation in the cytosol. Homodimer in its active, membrane-bound conformation; antiparallel coiled coil-mediated dimer formation. Interacts with ECPAS. Interacts with NEO 1. Interacts with VASP. Interacts with DCC and ITGB5; the presence of DCC inhibits ITGB5 binding. Interacts with tubulin; ITGB5 or DCC binding inhibits tubulin binding. Interacts strongly with CALM3 and weakly with CALM, the CALM3 interaction is essential for function in filopodial extension and motility. Interacts with ITGB1, ITGB3 and ITGB5. Detected in kidney, testis, liver, kidney, cerebellum and brain cortex (at protein level).

The protein resides in the cytoplasm. Its subcellular location is the cytosol. It is found in the cell projection. The protein localises to the lamellipodium. It localises to the ruffle. The protein resides in the cytoskeleton. Its subcellular location is the filopodium tip. It is found in the cell cortex. The protein localises to the filopodium membrane. Functionally, myosins are actin-based motor molecules with ATPase activity. Unconventional myosins serve in intracellular movements. MYO10 binds to actin filaments and actin bundles and functions as a plus end-directed motor. Moves with higher velocity and takes larger steps on actin bundles than on single actin filaments. The tail domain binds to membranous compartments containing phosphatidylinositol 3,4,5-trisphosphate, which are then moved relative to actin filaments. Regulates cell shape, cell spreading and cell adhesion. Stimulates the formation and elongation of filopodia. In hippocampal neurons it induces the formation of dendritic filopodia by trafficking the actin-remodeling protein VASP to the tips of filopodia, where it promotes actin elongation. Plays a role in formation of the podosome belt in osteoclasts. This Bos taurus (Bovine) protein is Unconventional myosin-X (MYO10).